Here is a 364-residue protein sequence, read N- to C-terminus: Chaperone protein DnaJ (364 aa).

A J domain is found at 4–69 (DYYEILGLSK…NKKAKYDRFG (66 aa)). The segment at 135–213 (GYKNNINITR…CKGKGSLTKQ (79 aa)) adopts a CR-type zinc-finger fold. Zn(2+) contacts are provided by C148, C151, C165, C168, C187, C190, C201, and C204. CXXCXGXG motif repeat units lie at residues 148–155 (CDSCLGKK), 165–172 (CNMCNGSG), 187–194 (CSKCYGEG), and 201–208 (CKSCKGKG).

It belongs to the DnaJ family. In terms of assembly, homodimer. Zn(2+) serves as cofactor.

It is found in the cytoplasm. Participates actively in the response to hyperosmotic and heat shock by preventing the aggregation of stress-denatured proteins and by disaggregating proteins, also in an autonomous, DnaK-independent fashion. Unfolded proteins bind initially to DnaJ; upon interaction with the DnaJ-bound protein, DnaK hydrolyzes its bound ATP, resulting in the formation of a stable complex. GrpE releases ADP from DnaK; ATP binding to DnaK triggers the release of the substrate protein, thus completing the reaction cycle. Several rounds of ATP-dependent interactions between DnaJ, DnaK and GrpE are required for fully efficient folding. Also involved, together with DnaK and GrpE, in the DNA replication of plasmids through activation of initiation proteins. The protein is Chaperone protein DnaJ of Borreliella burgdorferi (strain ATCC 35210 / DSM 4680 / CIP 102532 / B31) (Borrelia burgdorferi).